The following is a 343-amino-acid chain: MTTLTITRPDDWHIHLRDGAQLKDTVRDISRYMGRAIVMPNLVPPAIDTETALAYYDRIKAQVPAGSQFEPLMVLYLTDKTSPEEIRKAKASGKIVAAKLYPAGATTNSDSGVTDLKNIYPALEAMQEVGMLFLVHGEVTDSSIDIFDRERVFIENILSKIVADFPKLKIVLEHITTKDAVDFVTQASDNVAATITAHHLLYNRNHMLAGGIRPHFYCLPILKRNTHQQALLGAAASGNKKFFLGTDSAPHAKDRKEAACGCAGSYTAHAAIELYAEAFESVNALDKLEAFASFNGPDFYNLPRNSDTITLVKKSWDVPVSYPLGDNNVVPIRAGEQIDWQVE.

The Zn(2+) site is built by His13 and His15. Substrate is bound by residues 15 to 17 and Asn41; that span reads HLR. Zn(2+) contacts are provided by Lys99, His136, and His174. Position 99 is an N6-carboxylysine (Lys99). His136 lines the substrate pocket. Leu219 provides a ligand contact to substrate. Zn(2+) is bound at residue Asp247. Residue Asp247 is part of the active site. His251 and Ala263 together coordinate substrate.

The protein belongs to the metallo-dependent hydrolases superfamily. DHOase family. Class II DHOase subfamily. Homodimer. Requires Zn(2+) as cofactor.

The enzyme catalyses (S)-dihydroorotate + H2O = N-carbamoyl-L-aspartate + H(+). It participates in pyrimidine metabolism; UMP biosynthesis via de novo pathway; (S)-dihydroorotate from bicarbonate: step 3/3. In terms of biological role, catalyzes the reversible cyclization of carbamoyl aspartate to dihydroorotate. The sequence is that of Dihydroorotase from Shewanella sp. (strain ANA-3).